Consider the following 459-residue polypeptide: Lipase 4 (459 aa).

The first 14 residues, 1-14 (MLFLLFLLVAPIYA), serve as a signal peptide directing secretion. A disulfide bridge connects residues Cys110 and Cys281. Ser194 serves as the catalytic Charge relay system. 2 N-linked (GlcNAc...) asparagine glycosylation sites follow: Asn229 and Asn266. Residues Asp343 and His376 each act as charge relay system in the active site. A disulfide bridge connects residues Cys359 and Cys404.

The protein belongs to the AB hydrolase superfamily. Lipase family. Class Lip subfamily.

It localises to the secreted. It catalyses the reaction a triacylglycerol + H2O = a diacylglycerol + a fatty acid + H(+). Functionally, secreted lipase that is able to hydrolyze both the neutral triacylglycerols and the monopalmitate ester Tween 40, allowing the use of hydrolyzed products as carbon sources. Has broad lipolytic activity, which may be important for colonization and subsequent infection, therefore contributing to the persistence and virulence in human tissue. In Candida albicans (strain SC5314 / ATCC MYA-2876) (Yeast), this protein is Lipase 4.